The chain runs to 476 residues: Glycogen synthase (476 aa).

Lys15 is an ADP-alpha-D-glucose binding site.

The protein belongs to the glycosyltransferase 1 family. Bacterial/plant glycogen synthase subfamily.

It carries out the reaction [(1-&gt;4)-alpha-D-glucosyl](n) + ADP-alpha-D-glucose = [(1-&gt;4)-alpha-D-glucosyl](n+1) + ADP + H(+). It participates in glycan biosynthesis; glycogen biosynthesis. Its function is as follows. Synthesizes alpha-1,4-glucan chains using ADP-glucose. The chain is Glycogen synthase from Streptococcus equi subsp. zooepidemicus (strain H70).